We begin with the raw amino-acid sequence, 510 residues long: Rab proteins geranylgeranyltransferase component A 1 (510 aa).

This sequence belongs to the Rab GDI family. May interact with rab-5, rab-7 and rab-11. Does not interact with rab-3, rab-27 and rab-10. Expressed in several neurons including head neurons, motor neurons located in the ventral nerve cord, HSN and CAN neurons, and tail neurons, and in muscles such as body-wall, pharyngeal, intestinal and anal sphincter. Also expressed in seam cells, the hypodermis and the intestine.

It localises to the cytoplasm. Its function is as follows. Substrate-binding subunit of the Rab geranylgeranyltransferase (GGTase) complex. Binds unprenylated Rab proteins and presents the substrate peptide to the catalytic component B and remains bound to it after the geranylgeranyl transfer reaction. The component A is thought to be regenerated by transferring its prenylated Rab back to the donor membrane. Plays a role in neurotransmitter release from presynaptic terminals at neuromuscular junctions. Positively regulates the function of rab-27 in synaptic transmission most likely through mediating rab-27 prenylation. The sequence is that of Rab proteins geranylgeranyltransferase component A 1 from Caenorhabditis elegans.